Here is a 116-residue protein sequence, read N- to C-terminus: Immunoglobulin heavy variable 3-66 (116 aa).

The N-terminal stretch at 1 to 19 is a signal peptide; sequence MEFGLSWVFLVAILKGVQC. The framework-1 stretch occupies residues 20-44; it reads EVQLVESGGGLIQPGGSLRLSCAAS. In terms of domain architecture, Ig-like spans 20–116; sequence EVQLVESGGG…EDTAVYYCAR (97 aa). Cysteines 41 and 114 form a disulfide. The interval 45–52 is complementarity-determining-1; it reads GFTVSSNY. Positions 53–69 are framework-2; the sequence is MSWVRQAPGKGLEWVSV. Residues 70-76 are complementarity-determining-2; that stretch reads IYSCGST. Positions 77–114 are framework-3; the sequence is YYADSVKGRFTISRDNSKNTLYLQMNSLRAEDTAVYYC. The interval 115–116 is complementarity-determining-3; that stretch reads AR.

In terms of assembly, immunoglobulins are composed of two identical heavy chains and two identical light chains; disulfide-linked.

It is found in the secreted. The protein localises to the cell membrane. Functionally, v region of the variable domain of immunoglobulin heavy chains that participates in the antigen recognition. Immunoglobulins, also known as antibodies, are membrane-bound or secreted glycoproteins produced by B lymphocytes. In the recognition phase of humoral immunity, the membrane-bound immunoglobulins serve as receptors which, upon binding of a specific antigen, trigger the clonal expansion and differentiation of B lymphocytes into immunoglobulins-secreting plasma cells. Secreted immunoglobulins mediate the effector phase of humoral immunity, which results in the elimination of bound antigens. The antigen binding site is formed by the variable domain of one heavy chain, together with that of its associated light chain. Thus, each immunoglobulin has two antigen binding sites with remarkable affinity for a particular antigen. The variable domains are assembled by a process called V-(D)-J rearrangement and can then be subjected to somatic hypermutations which, after exposure to antigen and selection, allow affinity maturation for a particular antigen. The protein is Immunoglobulin heavy variable 3-66 of Homo sapiens (Human).